The following is a 639-amino-acid chain: MTNSNNGNGGTNAAASGWLGFSLSPHMASSTMDEHHHVHHHQQQQQQQQQQQHHQQQQHGLFFPSVTTAAAAAAYGLAGDVVAATNGYYSQLASMPLKSDGSLCIMEALRRTDQDHHGPKLEDFLGAAQPAMALSLDNTSSFYYGGGGAAAAGHGQHGYLQACDLYGGPAAPSLVTAADEEAAAAAAAMASWVAARGAATAYATGAADANAAENVLPSATAAQHLHHPLALSMSSGSLSSCITAGEYGMAAVAAADGGRKRGGAGGGGQKQPVHHRKSIDTFGQRTSQYRGVTRHRWTGRYEAHLWDNSCKKEGQTRKGRQGGYDMEEKAARAYDLAALKYWGPSTHINFPLEDYQEELEEMKNMTRQEYVAHLRRKSSGFSRGASMYRGVTRHHQHGRWQARIGRVSGNKDLYLGTFSTQEEAAEAYDVAAIKFRGLNAVTNFDITRYDVDKIMASNTLLPADLARRNAATTTSKDDHSAAGAGAIVSVHSAADIAVADTLWKATTAPRQQQQHHDDVVLSGADQAAFSVLHDLVAVDAAAAHQQQQQQQHMSMSAASSLVTSLSNSREGSPDRGGGLSMLFAKPSPAVAASAQQQASTKLMAAPLPLGSWVSSPPASARPPAVSIAHMPLFAAWTDA.

Disordered stretches follow at residues 25 to 59 and 258 to 277; these read PHMASSTMDEHHHVHHHQQQQQQQQQQQHHQQQQH and GRKRGGAGGGGQKQPVHHRK. Positions 43–59 are enriched in low complexity; that stretch reads QQQQQQQQQQHHQQQQH. 2 consecutive DNA-binding regions (AP2/ERF) follow at residues 288–351 and 387–445; these read QYRG…INFP and MYRG…TNFD. The segment covering 547-561 has biased composition (low complexity); sequence QQQQQHMSMSAASSL. Residues 547–579 are disordered; the sequence is QQQQQHMSMSAASSLVTSLSNSREGSPDRGGGL.

The protein belongs to the AP2/ERF transcription factor family. AP2 subfamily. In terms of tissue distribution, highly expressed at the base of the stem. Expressed in stems. Expressed a low levels in crown roots and seeds. Expressed in the stem region where adventitious (crown) root initiation occurs.

Its subcellular location is the nucleus. In terms of biological role, acts as a positive regulator of adventitious (crown) root formation by promoting its initiation. Promotes adventitious root initiation through repression of cytokinin signaling by positively regulating the two-component response regulator RR1. Regulated by the auxin response factor and transcriptional activator ARF23/ARF1. This Oryza sativa subsp. japonica (Rice) protein is AP2-like ethylene-responsive transcription factor CRL5.